Here is a 95-residue protein sequence, read N- to C-terminus: Large ribosomal subunit protein uL23 (95 aa).

Belongs to the universal ribosomal protein uL23 family. As to quaternary structure, part of the 50S ribosomal subunit. Contacts protein L29, and trigger factor when it is bound to the ribosome.

In terms of biological role, one of the early assembly proteins it binds 23S rRNA. One of the proteins that surrounds the polypeptide exit tunnel on the outside of the ribosome. Forms the main docking site for trigger factor binding to the ribosome. This Desulforudis audaxviator (strain MP104C) protein is Large ribosomal subunit protein uL23.